A 378-amino-acid polypeptide reads, in one-letter code: 3-dehydroquinate synthase (378 aa).

Residues 115–119 (GVVGD), 139–140 (TS), K152, and K161 each bind NAD(+). Residues E194, H256, and H275 each contribute to the Zn(2+) site.

Belongs to the sugar phosphate cyclases superfamily. Dehydroquinate synthase family. It depends on Co(2+) as a cofactor. Requires Zn(2+) as cofactor. The cofactor is NAD(+).

The protein localises to the cytoplasm. It carries out the reaction 7-phospho-2-dehydro-3-deoxy-D-arabino-heptonate = 3-dehydroquinate + phosphate. It functions in the pathway metabolic intermediate biosynthesis; chorismate biosynthesis; chorismate from D-erythrose 4-phosphate and phosphoenolpyruvate: step 2/7. Catalyzes the conversion of 3-deoxy-D-arabino-heptulosonate 7-phosphate (DAHP) to dehydroquinate (DHQ). The polypeptide is 3-dehydroquinate synthase (Brucella anthropi (strain ATCC 49188 / DSM 6882 / CCUG 24695 / JCM 21032 / LMG 3331 / NBRC 15819 / NCTC 12168 / Alc 37) (Ochrobactrum anthropi)).